A 475-amino-acid polypeptide reads, in one-letter code: Protein nucleotidyltransferase YdiU (475 aa).

ATP is bound by residues G82, G84, R85, K105, D117, G118, R168, and R175. Catalysis depends on D240, which acts as the Proton acceptor. N241 and D250 together coordinate Mg(2+). D250 contributes to the ATP binding site.

The protein belongs to the SELO family. It depends on Mg(2+) as a cofactor. Requires Mn(2+) as cofactor.

It carries out the reaction L-seryl-[protein] + ATP = 3-O-(5'-adenylyl)-L-seryl-[protein] + diphosphate. The catalysed reaction is L-threonyl-[protein] + ATP = 3-O-(5'-adenylyl)-L-threonyl-[protein] + diphosphate. The enzyme catalyses L-tyrosyl-[protein] + ATP = O-(5'-adenylyl)-L-tyrosyl-[protein] + diphosphate. It catalyses the reaction L-histidyl-[protein] + UTP = N(tele)-(5'-uridylyl)-L-histidyl-[protein] + diphosphate. It carries out the reaction L-seryl-[protein] + UTP = O-(5'-uridylyl)-L-seryl-[protein] + diphosphate. The catalysed reaction is L-tyrosyl-[protein] + UTP = O-(5'-uridylyl)-L-tyrosyl-[protein] + diphosphate. In terms of biological role, nucleotidyltransferase involved in the post-translational modification of proteins. It can catalyze the addition of adenosine monophosphate (AMP) or uridine monophosphate (UMP) to a protein, resulting in modifications known as AMPylation and UMPylation. The protein is Protein nucleotidyltransferase YdiU of Aeromonas hydrophila subsp. hydrophila (strain ATCC 7966 / DSM 30187 / BCRC 13018 / CCUG 14551 / JCM 1027 / KCTC 2358 / NCIMB 9240 / NCTC 8049).